Here is a 445-residue protein sequence, read N- to C-terminus: ATP-dependent protease ATPase subunit HslU (445 aa).

ATP is bound by residues isoleucine 17, 59-64 (GVGKTE), aspartate 254, glutamate 319, and arginine 391.

It belongs to the ClpX chaperone family. HslU subfamily. In terms of assembly, a double ring-shaped homohexamer of HslV is capped on each side by a ring-shaped HslU homohexamer. The assembly of the HslU/HslV complex is dependent on binding of ATP.

The protein resides in the cytoplasm. Functionally, ATPase subunit of a proteasome-like degradation complex; this subunit has chaperone activity. The binding of ATP and its subsequent hydrolysis by HslU are essential for unfolding of protein substrates subsequently hydrolyzed by HslV. HslU recognizes the N-terminal part of its protein substrates and unfolds these before they are guided to HslV for hydrolysis. The sequence is that of ATP-dependent protease ATPase subunit HslU from Pseudomonas fluorescens (strain Pf0-1).